A 385-amino-acid chain; its full sequence is Glucans biosynthesis protein C (385 aa).

Transmembrane regions (helical) follow at residues 17 to 37, 60 to 80, 91 to 111, 137 to 157, 173 to 193, 212 to 232, 239 to 259, 274 to 294, 311 to 331, and 338 to 358; these read AWLM…SHTW, MQVF…RYPL, VGIP…IMLQ, ISHL…VWIF, KFSM…YAVI, FIVM…LAFI, LFTT…VAYL, TESV…FSFG, ASLF…AYIT, and WLGF…LYEI.

It belongs to the acyltransferase 3 family. OpgC subfamily.

It localises to the cell membrane. Its pathway is glycan metabolism; osmoregulated periplasmic glucan (OPG) biosynthesis. Its function is as follows. Necessary for the succinyl substitution of periplasmic glucans. Could catalyze the transfer of succinyl residues from the cytoplasmic side of the membrane to the nascent glucan backbones on the periplasmic side of the membrane. This chain is Glucans biosynthesis protein C, found in Shigella dysenteriae serotype 1 (strain Sd197).